Here is a 317-residue protein sequence, read N- to C-terminus: Protein translocase subunit SecF (317 aa).

A run of 6 helical transmembrane segments spans residues 11–31, 135–155, 166–186, 197–217, 244–266, and 276–298; these read FYLLSLLIIIPGTIYLLLFGL, RSIVAIALASLGILGYIAFAF, ICAIIAMLHDVLVVVGIFAIL, LFVTALLTVIGFSVHDTIVVF, LVRSVNTSMTVIFTLLALYFFGG, and LLIGIVSGTYSSIFNASLLLVSW.

The protein belongs to the SecD/SecF family. SecF subfamily. Forms a complex with SecD. Part of the essential Sec protein translocation apparatus which comprises SecA, SecYEG and auxiliary proteins SecDF. Other proteins may also be involved.

It is found in the cell membrane. Functionally, part of the Sec protein translocase complex. Interacts with the SecYEG preprotein conducting channel. SecDF uses the proton motive force (PMF) to complete protein translocation after the ATP-dependent function of SecA. The protein is Protein translocase subunit SecF of Thermobaculum terrenum (strain ATCC BAA-798 / CCMEE 7001 / YNP1).